The following is a 340-amino-acid chain: Adenosine deaminase-like protein (340 aa).

Zn(2+) contacts are provided by H14 and H16. Residues H16, N18, H68, 100–103 (TTPK), and G173 each bind N(6)-methyl-AMP. Zn(2+) is bound at residue H200. Residues E203, D278, and D279 each coordinate N(6)-methyl-AMP. The active-site Proton donor is the E203. D278 serves as a coordination point for Zn(2+).

This sequence belongs to the metallo-dependent hydrolases superfamily. Adenosine and AMP deaminases family. In terms of assembly, monomer. Zn(2+) is required as a cofactor.

It catalyses the reaction N(6)-methyl-AMP + H2O + H(+) = IMP + methylamine. Its function is as follows. Catalyzes the hydrolysis of the free cytosolic methylated adenosine nucleotide N(6)-methyl-AMP (N6-mAMP) to produce inositol monophosphate (IMP) and methylamine. Is required for the catabolism of cytosolic N6-mAMP, which is derived from the degradation of mRNA containing N6-methylated adenine (m6A). This is Adenosine deaminase-like protein from Drosophila pseudoobscura pseudoobscura (Fruit fly).